The chain runs to 294 residues: Acetyl-coenzyme A carboxylase carboxyl transferase subunit beta (294 aa).

The region spanning 27–294 is the CoA carboxyltransferase N-terminal domain; the sequence is LWHKCPSCDA…PSPVALPVTA (268 aa). Zn(2+) contacts are provided by Cys31, Cys34, Cys50, and Cys53. The segment at 31–53 adopts a C4-type zinc-finger fold; sequence CPSCDAVLYRPELEKTLDVCPKC.

The protein belongs to the AccD/PCCB family. As to quaternary structure, acetyl-CoA carboxylase is a heterohexamer composed of biotin carboxyl carrier protein (AccB), biotin carboxylase (AccC) and two subunits each of ACCase subunit alpha (AccA) and ACCase subunit beta (AccD). The cofactor is Zn(2+).

Its subcellular location is the cytoplasm. It carries out the reaction N(6)-carboxybiotinyl-L-lysyl-[protein] + acetyl-CoA = N(6)-biotinyl-L-lysyl-[protein] + malonyl-CoA. The protein operates within lipid metabolism; malonyl-CoA biosynthesis; malonyl-CoA from acetyl-CoA: step 1/1. Functionally, component of the acetyl coenzyme A carboxylase (ACC) complex. Biotin carboxylase (BC) catalyzes the carboxylation of biotin on its carrier protein (BCCP) and then the CO(2) group is transferred by the transcarboxylase to acetyl-CoA to form malonyl-CoA. This Ectopseudomonas mendocina (strain ymp) (Pseudomonas mendocina) protein is Acetyl-coenzyme A carboxylase carboxyl transferase subunit beta.